The sequence spans 217 residues: Monomethylamine corrinoid protein 2 (217 aa).

Residues 1–91 (MTNTEIFEKL…ELEKSKVEGE (91 aa)) enclose the B12-binding N-terminal domain. Residues 93 to 217 (TGLAITFVAE…AAKVALNIMK (125 aa)) enclose the B12-binding domain. A methylcob(III)alamin-binding site is contributed by His106.

It belongs to the methylamine corrinoid protein family. As to quaternary structure, can form a complex with MtmB.

The protein operates within one-carbon metabolism; methanogenesis from methylamine. Acts as a methyl group carrier between MtmB and MtbA. The polypeptide is Monomethylamine corrinoid protein 2 (mtmC2) (Methanosarcina acetivorans (strain ATCC 35395 / DSM 2834 / JCM 12185 / C2A)).